Consider the following 160-residue polypeptide: Phosphopantetheine adenylyltransferase (160 aa).

Ser-11 serves as a coordination point for substrate. Residues 11–12 (SF) and His-19 contribute to the ATP site. The substrate site is built by Lys-43, Leu-75, and Arg-89. ATP contacts are provided by residues 90–92 (GLR), Glu-100, and 125–131 (YSFISSS).

It belongs to the bacterial CoaD family. Homohexamer. The cofactor is Mg(2+).

It is found in the cytoplasm. The enzyme catalyses (R)-4'-phosphopantetheine + ATP + H(+) = 3'-dephospho-CoA + diphosphate. It participates in cofactor biosynthesis; coenzyme A biosynthesis; CoA from (R)-pantothenate: step 4/5. Its function is as follows. Reversibly transfers an adenylyl group from ATP to 4'-phosphopantetheine, yielding dephospho-CoA (dPCoA) and pyrophosphate. This is Phosphopantetheine adenylyltransferase from Staphylococcus aureus (strain Mu3 / ATCC 700698).